The following is an 806-amino-acid chain: Leucine--tRNA ligase (806 aa).

The 'HIGH' region signature appears at 40–51 (PYPSGSGLHVGH). Positions 576 to 580 (KMSKS) match the 'KMSKS' region motif. An ATP-binding site is contributed by K579.

This sequence belongs to the class-I aminoacyl-tRNA synthetase family.

It localises to the cytoplasm. It catalyses the reaction tRNA(Leu) + L-leucine + ATP = L-leucyl-tRNA(Leu) + AMP + diphosphate. This chain is Leucine--tRNA ligase, found in Chlorobium phaeobacteroides (strain BS1).